The primary structure comprises 1661 residues: Microtubule cross-linking factor 2 (1661 aa).

The segment at 1–187 (MEAPAAEPPV…EPSVAASSVG (187 aa)) is disordered. Composition is skewed to low complexity over residues 76–94 (AVAPGARGAGVRVAGVRTG) and 133–149 (LLGLELALSSDAESAAG). The segment covering 167–176 (QQPPRPPASP) has biased composition (pro residues). The interval 211 to 240 (PSGLVRELEELRSENDYLKDEIEELRAEML) is required for association with Golgi apparatus membrane. 2 coiled-coil regions span residues 218 to 281 (LEEL…AERR) and 310 to 351 (SMRL…LQTE). The tract at residues 353–373 (ERPREHSLKKRGTRSLGKADK) is disordered. 3 coiled-coil regions span residues 450-484 (LKLVEEEANLLSRRIVELEVENRGLRAEMDDMKDH), 820-865 (IKEL…LKED), and 1083-1117 (SQEKLQLVERLQGEKQQVEQQVKELQNRLSQLQKA). Phosphoserine is present on S1169. Residues 1196 to 1221 (AFGFVSSEPGDPEKDTKEKPGLSSRD) form a disordered region. Positions 1206 to 1215 (DPEKDTKEKP) are enriched in basic and acidic residues. The residue at position 1255 (S1255) is a Phosphoserine. Disordered regions lie at residues 1432–1456 (RPCCSPKYGSPKLQRRSVSKLDSSK), 1538–1563 (RAPSPTSSAGEEGTKKPEPLSPASYH), and 1636–1661 (HSPSKCRLHPSESSWGGEERALPPSE). The span at 1652–1661 (GEERALPPSE) shows a compositional bias: basic and acidic residues.

Belongs to the MTCL family. In terms of assembly, interacts with CLASP1 and CLASP2. The C-terminal 25 kDa form occurs as a monomer. Post-translationally, proteolytically cleaved in primary hepatocytes into a C-terminal 80 kDa form. Proteolytically cleaved into a C-terminal SOGA 25 kDa form that is detected in plasma. In terms of processing, phosphorylated during mitosis in a CDK1-dependent manner.

The protein resides in the cytoplasm. It is found in the cytoskeleton. The protein localises to the golgi apparatus membrane. Its subcellular location is the midbody. It localises to the secreted. Functionally, microtubule-associated factor that enables integration of the centrosomal and Golgi-associated microtubules on the Golgi membrane, supporting directional migration. Preferentially acts on the perinuclear microtubules accumulated around the Golgi. Associates with the Golgi membrane through the N-terminal coiled-coil region and directly binds microtubules through the C-terminal domain. Required for faithful chromosome segregation during mitosis. Regulates autophagy by playing a role in the reduction of glucose production in an adiponectin- and insulin-dependent manner. The sequence is that of Microtubule cross-linking factor 2 from Homo sapiens (Human).